The primary structure comprises 340 residues: Probable HTH-type transcriptional regulator EndR (340 aa).

The region spanning 1–58 (MVTTMKEVAERAGVSKSTVSQFLQKRYNYMSENTKKKIEQAIEDLSYIPNEVARSLKQ) is the HTH lacI-type domain. The segment at residues 5–24 (MKEVAERAGVSKSTVSQFLQ) is a DNA-binding region (H-T-H motif).

In terms of biological role, putative repressor of the endoglucanase operon. This is Probable HTH-type transcriptional regulator EndR (endR) from Paenibacillus polymyxa (Bacillus polymyxa).